The sequence spans 38 residues: Cytochrome b6-f complex subunit 5 (38 aa).

The chain crosses the membrane as a helical span at residues 5-25; sequence LLSGIVLGSIPITLAGSFVTA.

Belongs to the PetG family. In terms of assembly, the 4 large subunits of the cytochrome b6-f complex are cytochrome b6, subunit IV (17 kDa polypeptide, PetD), cytochrome f and the Rieske protein, while the 4 small subunits are PetG, PetL, PetM and PetN. The complex functions as a dimer.

It is found in the plastid. It localises to the chloroplast thylakoid membrane. Its function is as follows. Component of the cytochrome b6-f complex, which mediates electron transfer between photosystem II (PSII) and photosystem I (PSI), cyclic electron flow around PSI, and state transitions. PetG is required for either the stability or assembly of the cytochrome b6-f complex. This chain is Cytochrome b6-f complex subunit 5, found in Huperzia lucidula (Shining clubmoss).